The following is a 388-amino-acid chain: Mannitol-1-phosphate 5-dehydrogenase (388 aa).

NAD(+) is bound at residue 5–16 (AVHFGGGNIGRG). The active site involves lysine 213.

The protein belongs to the mannitol dehydrogenase family. Monomer.

The enzyme catalyses D-mannitol 1-phosphate + NAD(+) = beta-D-fructose 6-phosphate + NADH + H(+). Its function is as follows. Catalyzes the NAD(H)-dependent interconversion of D-fructose 6-phosphate and D-mannitol 1-phosphate in the mannitol metabolic pathway. This is Mannitol-1-phosphate 5-dehydrogenase from Penicillium rubens (strain ATCC 28089 / DSM 1075 / NRRL 1951 / Wisconsin 54-1255) (Penicillium chrysogenum).